Here is a 395-residue protein sequence, read N- to C-terminus: Multidrug resistance protein MdtL (395 aa).

12 helical membrane-spanning segments follow: residues 4–24, 42–62, 69–89, 93–113, 131–151, 158–178, 217–237, 247–267, 271–291, 295–315, 333–353, and 358–378; these read FLLC…MYLV, IAFS…GKIA, PVAI…SRAS, LFLS…VVAF, LLNG…HLIM, SLFY…LFIL, VSVI…VMGF, ALTA…LGLF, TLML…SLAH, VTLF…GVAM, LGIA…ILGI, and MLIG…FSVA.

It belongs to the major facilitator superfamily. DHA1 family. MdtL (TC 2.A.1.2.22) subfamily.

It localises to the cell inner membrane. This is Multidrug resistance protein MdtL from Salmonella agona (strain SL483).